A 245-amino-acid polypeptide reads, in one-letter code: Flavin mononucleotide hydrolase 1, chloroplatic (245 aa).

The transit peptide at 1–26 (MAAAAMHTSAEFINLKPNMWKKNPVR) directs the protein to the chloroplast.

Belongs to the HAD-like hydrolase superfamily. DOG/GPP family. As to quaternary structure, homodimer. The cofactor is Mg(2+).

It localises to the plastid. The protein localises to the chloroplast stroma. The enzyme catalyses FMN + H2O = riboflavin + phosphate. The catalysed reaction is 5-amino-6-(5-phospho-D-ribitylamino)uracil + H2O = 5-amino-6-(D-ribitylamino)uracil + phosphate. Functionally, FMN hydrolase that catalyzes the dephosphorylation of flavin mononucleotide (FMN) to riboflavin. Can also dephosphorylate 5-amino-6-(5-phospho-D-ribitylamino)uracil, also known as ARPP. Not required for riboflavin biosynthesis in planta, but may help maintaining flavin homeostasis within chloroplasts. This is Flavin mononucleotide hydrolase 1, chloroplatic from Arabidopsis thaliana (Mouse-ear cress).